The following is a 156-amino-acid chain: Zinc metalloproteinase-disintegrin jararin (156 aa).

Residues 1–67 (FVANRMAHEL…NYYGCLLNEP (67 aa)) enclose the Peptidase M12B domain. His8 serves as a coordination point for Zn(2+). Glu9 is a catalytic residue. Zn(2+) is bound at residue His12. Disulfide bonds link Cys23–Cys47, Cys25–Cys30, Cys78–Cys97, Cys89–Cys107, Cys91–Cys102, Cys101–Cys124, Cys115–Cys121, Cys120–Cys145, and Cys133–Cys152. The Disintegrin domain maps to 75 to 156 (PPFCGNYYPE…GQSGDCPRNS (82 aa)). The segment covering 136–145 (GRGDNPDDRC) has biased composition (basic and acidic residues). A disordered region spans residues 136–156 (GRGDNPDDRCTGQSGDCPRNS). Residues 137–139 (RGD) carry the Cell attachment site motif. Residues 146–156 (TGQSGDCPRNS) are compositionally biased toward polar residues.

This sequence belongs to the venom metalloproteinase (M12B) family. P-II subfamily. P-IIb sub-subfamily. In terms of assembly, monomer. The cofactor is Zn(2+). In terms of tissue distribution, expressed by the venom gland.

It localises to the secreted. In terms of biological role, snake venom zinc metalloproteinase that inhibits ADP-induced platelet aggregation (probably by binding integrin alpha-IIb/beta-3 (ITGA2B/ITGB3)) and degrades fibrinogen. The polypeptide is Zinc metalloproteinase-disintegrin jararin (Bothrops jararaca (Jararaca)).